Here is a 729-residue protein sequence, read N- to C-terminus: Beta-galactosidase 4 (729 aa).

An N-terminal signal peptide occupies residues 1–35 (MAPAPTPAAAAGRRVAVLAAALVAASLAASVGVAN). The active-site Proton donor is the Glu194. Glu263 serves as the catalytic Nucleophile.

The protein belongs to the glycosyl hydrolase 35 family.

It localises to the secreted. The protein resides in the extracellular space. Its subcellular location is the apoplast. It carries out the reaction Hydrolysis of terminal non-reducing beta-D-galactose residues in beta-D-galactosides.. This is Beta-galactosidase 4 from Oryza sativa subsp. japonica (Rice).